We begin with the raw amino-acid sequence, 281 residues long: Phosphatidylglycerol--prolipoprotein diacylglyceryl transferase (281 aa).

4 helical membrane passes run 23 to 43 (VGPL…MFAW), 71 to 91 (FVIW…VLFY), 107 to 127 (WDGG…MILF), and 133 to 153 (IKVW…LGVV). Residue Arg-154 participates in a 1,2-diacyl-sn-glycero-3-phospho-(1'-sn-glycerol) binding. The next 3 membrane-spanning stretches (helical) occupy residues 189–209 (LYEA…LVWV), 217–237 (GFIA…VEFF), and 247–267 (LFGG…LIGL).

The protein belongs to the Lgt family.

Its subcellular location is the cell inner membrane. The enzyme catalyses L-cysteinyl-[prolipoprotein] + a 1,2-diacyl-sn-glycero-3-phospho-(1'-sn-glycerol) = an S-1,2-diacyl-sn-glyceryl-L-cysteinyl-[prolipoprotein] + sn-glycerol 1-phosphate + H(+). It functions in the pathway protein modification; lipoprotein biosynthesis (diacylglyceryl transfer). In terms of biological role, catalyzes the transfer of the diacylglyceryl group from phosphatidylglycerol to the sulfhydryl group of the N-terminal cysteine of a prolipoprotein, the first step in the formation of mature lipoproteins. This is Phosphatidylglycerol--prolipoprotein diacylglyceryl transferase from Brucella anthropi (strain ATCC 49188 / DSM 6882 / CCUG 24695 / JCM 21032 / LMG 3331 / NBRC 15819 / NCTC 12168 / Alc 37) (Ochrobactrum anthropi).